Consider the following 314-residue polypeptide: tRNA dimethylallyltransferase (314 aa).

Residue 11–18 (GPTGSGKT) participates in ATP binding. 13–18 (TGSGKT) contacts substrate. The segment at 36 to 39 (DSMQ) is interaction with substrate tRNA.

This sequence belongs to the IPP transferase family. Monomer. Requires Mg(2+) as cofactor.

The enzyme catalyses adenosine(37) in tRNA + dimethylallyl diphosphate = N(6)-dimethylallyladenosine(37) in tRNA + diphosphate. Catalyzes the transfer of a dimethylallyl group onto the adenine at position 37 in tRNAs that read codons beginning with uridine, leading to the formation of N6-(dimethylallyl)adenosine (i(6)A). The protein is tRNA dimethylallyltransferase of Chlamydia trachomatis serovar D (strain ATCC VR-885 / DSM 19411 / UW-3/Cx).